A 286-amino-acid chain; its full sequence is Alpha-ketoglutarate-dependent dioxygenase alkB homolog 3 (286 aa).

The disordered stretch occupies residues 1-46; that stretch reads MEDKRQRARVQGGWATPTKSQSATQPASPARSRLSQTAGPAWRSKE. Residues 17–38 are compositionally biased toward polar residues; it reads PTKSQSATQPASPARSRLSQTA. Residues W115 and 141-143 contribute to the substrate site; that span reads YTY. The Fe2OG dioxygenase domain occupies 172 to 278; the sequence is TFNSLLCNFY…RVNLTFRTVY (107 aa). L177 is subject to (4R)-5-hydroxyleucine; alternate. L177 is modified ((4R)-5-oxoleucine; alternate). 179–181 lines the 2-oxoglutarate pocket; the sequence is NFY. Fe cation contacts are provided by H191 and D193. Position 194 (D194) interacts with substrate. H257 is a Fe cation binding site. Residues 269 to 275 and R275 contribute to the 2-oxoglutarate site; that span reads RVNLTFR.

This sequence belongs to the alkB family. Interacts with the ASCC complex composed of ASCC1, ASCC2 and ASCC3. Interacts directly with ASCC3, and is thereby recruited to the ASCC complex. Interacts with OTUD4; the interaction is direct. Interacts with USP7 and USP9X. Requires Fe(2+) as cofactor. Ubiquitinated; undergoes 'Lys-48'-linked polyubiquitination. OTUD4 promotes USP7 and USP9X-dependent deubiquitination of 'Lys-48'-polyubiquitinated ALKBH3 promoting the repair of alkylated DNA lesions. As to expression, detected in testis, kidney, liver and heart.

It localises to the nucleus. It is found in the cytoplasm. It catalyses the reaction an N(1)-methyladenosine in mRNA + 2-oxoglutarate + O2 = an adenosine in mRNA + formaldehyde + succinate + CO2. The enzyme catalyses a methylated nucleobase within DNA + 2-oxoglutarate + O2 = a nucleobase within DNA + formaldehyde + succinate + CO2. The catalysed reaction is an N(1)-methyl-2'-deoxyadenosine in single-stranded DNA + 2-oxoglutarate + O2 = a 2'-deoxyadenosine in single-stranded DNA + formaldehyde + succinate + CO2 + H(+). It carries out the reaction an N(3)-methyl-2'-deoxycytidine in single-stranded DNA + 2-oxoglutarate + O2 = a 2'-deoxycytidine in single-stranded DNA + formaldehyde + succinate + CO2 + H(+). It catalyses the reaction a 3,N(4)-etheno-2'-deoxycytidine in single-stranded DNA + 2-oxoglutarate + O2 + H2O = a 2'-deoxycytidine in single-stranded DNA + glyoxal + succinate + CO2. With respect to regulation, activated by ascorbate. Functionally, dioxygenase that mediates demethylation of DNA and RNA containing 1-methyladenosine (m1A). Repairs alkylated DNA containing 1-methyladenosine (m1A) and 3-methylcytosine (m3C) by oxidative demethylation. Has a strong preference for single-stranded DNA. Able to process alkylated m3C within double-stranded regions via its interaction with ASCC3, which promotes DNA unwinding to generate single-stranded substrate needed for ALKBH3. Can repair exocyclic 3,N4-ethenocytosine adducs in single-stranded DNA. Also acts on RNA. Demethylates N(1)-methyladenosine (m1A) RNA, an epigenetic internal modification of messenger RNAs (mRNAs) highly enriched within 5'-untranslated regions (UTRs) and in the vicinity of start codons. Requires molecular oxygen, alpha-ketoglutarate and iron. In Mus musculus (Mouse), this protein is Alpha-ketoglutarate-dependent dioxygenase alkB homolog 3.